A 79-amino-acid polypeptide reads, in one-letter code: RNA-binding protein Hfq (79 aa).

Residues 10 to 69 (DPFLNALRKEHVPVSIYLVNGIKLQGNIESFDQYVVLLRNTVTQMVYKHAISTVVPARPV) enclose the Sm domain.

The protein belongs to the Hfq family. Homohexamer.

Functionally, RNA chaperone that binds small regulatory RNA (sRNAs) and mRNAs to facilitate mRNA translational regulation in response to envelope stress, environmental stress and changes in metabolite concentrations. Also binds with high specificity to tRNAs. This is RNA-binding protein Hfq from Burkholderia cenocepacia (strain HI2424).